Consider the following 392-residue polypeptide: ATP phosphoribosyltransferase regulatory subunit (392 aa).

The protein belongs to the class-II aminoacyl-tRNA synthetase family. HisZ subfamily. As to quaternary structure, heteromultimer composed of HisG and HisZ subunits.

It is found in the cytoplasm. It participates in amino-acid biosynthesis; L-histidine biosynthesis; L-histidine from 5-phospho-alpha-D-ribose 1-diphosphate: step 1/9. Its function is as follows. Required for the first step of histidine biosynthesis. May allow the feedback regulation of ATP phosphoribosyltransferase activity by histidine. In Listeria monocytogenes serotype 4b (strain F2365), this protein is ATP phosphoribosyltransferase regulatory subunit.